Here is a 258-residue protein sequence, read N- to C-terminus: Type III pantothenate kinase (258 aa).

6–13 (DVGNTNIV) lines the ATP pocket. Substrate is bound by residues Tyr-100 and 107–110 (GADR). Asp-109 serves as the catalytic Proton acceptor. Residue Asp-129 participates in K(+) binding. An ATP-binding site is contributed by Thr-132. Substrate is bound at residue Thr-184.

It belongs to the type III pantothenate kinase family. Homodimer. NH4(+) serves as cofactor. Requires K(+) as cofactor.

The protein localises to the cytoplasm. It catalyses the reaction (R)-pantothenate + ATP = (R)-4'-phosphopantothenate + ADP + H(+). The protein operates within cofactor biosynthesis; coenzyme A biosynthesis; CoA from (R)-pantothenate: step 1/5. Functionally, catalyzes the phosphorylation of pantothenate (Pan), the first step in CoA biosynthesis. The sequence is that of Type III pantothenate kinase from Clostridium botulinum (strain Kyoto / Type A2).